Reading from the N-terminus, the 365-residue chain is Chorismate synthase (365 aa).

Arginine 47 contributes to the NADP(+) binding site. FMN-binding positions include 124 to 126 (RAS), glycine 287, 302 to 306 (KPTAT), and arginine 328.

It belongs to the chorismate synthase family. In terms of assembly, homotetramer. FMNH2 is required as a cofactor.

The enzyme catalyses 5-O-(1-carboxyvinyl)-3-phosphoshikimate = chorismate + phosphate. The protein operates within metabolic intermediate biosynthesis; chorismate biosynthesis; chorismate from D-erythrose 4-phosphate and phosphoenolpyruvate: step 7/7. Functionally, catalyzes the anti-1,4-elimination of the C-3 phosphate and the C-6 proR hydrogen from 5-enolpyruvylshikimate-3-phosphate (EPSP) to yield chorismate, which is the branch point compound that serves as the starting substrate for the three terminal pathways of aromatic amino acid biosynthesis. This reaction introduces a second double bond into the aromatic ring system. The chain is Chorismate synthase from Prochlorococcus marinus (strain MIT 9312).